Reading from the N-terminus, the 864-residue chain is Protein translocase subunit SecA (864 aa).

ATP is bound by residues Gln87, 105–109, and Asp512; that span reads GEGKT.

The protein belongs to the SecA family. Monomer and homodimer. Part of the essential Sec protein translocation apparatus which comprises SecA, SecYEG and auxiliary proteins SecDF-YajC and YidC.

It is found in the cell inner membrane. Its subcellular location is the cytoplasm. The catalysed reaction is ATP + H2O + cellular proteinSide 1 = ADP + phosphate + cellular proteinSide 2.. Functionally, part of the Sec protein translocase complex. Interacts with the SecYEG preprotein conducting channel. Has a central role in coupling the hydrolysis of ATP to the transfer of proteins into and across the cell membrane, serving as an ATP-driven molecular motor driving the stepwise translocation of polypeptide chains across the membrane. The protein is Protein translocase subunit SecA of Buchnera aphidicola subsp. Cinara cedri (strain Cc).